The following is a 438-amino-acid chain: sn-glycerol-3-phosphate-binding periplasmic protein UgpB (438 aa).

The first 23 residues, 1–23, serve as a signal peptide directing secretion; it reads MKPLRYTASALALGLALMANAQA. Residues Y65, E89, S144, S270, G307, Y346, and R397 each coordinate sn-glycerol 3-phosphate.

This sequence belongs to the bacterial solute-binding protein 1 family. As to quaternary structure, the complex is composed of two ATP-binding proteins (UgpC), two transmembrane proteins (UgpA and UgpE) and a solute-binding protein (UgpB).

It is found in the periplasm. Part of the ABC transporter complex UgpBAEC involved in sn-glycerol-3-phosphate (G3P) import. Binds G3P. The chain is sn-glycerol-3-phosphate-binding periplasmic protein UgpB (ugpB) from Escherichia coli O6:K15:H31 (strain 536 / UPEC).